Reading from the N-terminus, the 465-residue chain is Phenylalanine--tRNA ligase alpha subunit (465 aa).

L-phenylalanine-binding positions include threonine 309, 348 to 350 (QLD), and phenylalanine 388. Glutamate 390 serves as a coordination point for Mg(2+).

The protein belongs to the class-II aminoacyl-tRNA synthetase family. Phe-tRNA synthetase alpha subunit type 2 subfamily. In terms of assembly, tetramer of two alpha and two beta subunits. Mg(2+) serves as cofactor.

It is found in the cytoplasm. The catalysed reaction is tRNA(Phe) + L-phenylalanine + ATP = L-phenylalanyl-tRNA(Phe) + AMP + diphosphate + H(+). The protein is Phenylalanine--tRNA ligase alpha subunit of Sulfolobus acidocaldarius (strain ATCC 33909 / DSM 639 / JCM 8929 / NBRC 15157 / NCIMB 11770).